The primary structure comprises 483 residues: Auxin transporter-like protein 2 (483 aa).

Topologically, residues 1 to 53 (MENGEKAAETVVVGNYVEMEKDGKALDIKSKLSDMFWHGGSAYDAWFSCASNQ) are cytoplasmic. The helical transmembrane segment at 54 to 71 (VAQVLLTLPYSFSQLGML) threads the bilayer. At 72–73 (SG) the chain is on the extracellular side. Residues 74-94 (ILFQLFYGILGSWTAYLISIL) form a helical membrane-spanning segment. Residues 95–130 (YVEYRTRKEREKVNFRNHVIQWFEVLDGLLGKHWRN) lie on the Cytoplasmic side of the membrane. Residues 131 to 151 (VGLAFNCTFLLFGSVIQLIAC) form a helical membrane-spanning segment. The Extracellular segment spans residues 152 to 166 (ASNIYYINDNLDKRT). A helical membrane pass occupies residues 167–187 (WTYIFGACCATTVFIPSFHNY). Residues 188-190 (RIW) are Cytoplasmic-facing. A helical membrane pass occupies residues 191–211 (SFLGLLMTTYTAWYLTIASIL). Topologically, residues 212-226 (HGQVEGVKHSGPSKL) are extracellular. A helical membrane pass occupies residues 227–247 (VLYFTGATNILYTFGGHAVTV). The Cytoplasmic segment spans residues 248–261 (EIMHAMWKPQKFKS). Residues 262–282 (IYLFATLYVLTLTLPSASAVY) form a helical membrane-spanning segment. Residues 283–306 (WAFGDLLLNHSNAFALLPKNLYRD) are Extracellular-facing. The N-linked (GlcNAc...) asparagine glycan is linked to asparagine 291. Residues 307-327 (FAVVLMLIHQFITFGFACTPL) form a helical membrane-spanning segment. Over 328 to 350 (YFVWEKLIGMHECRSMCKRAAAR) the chain is Cytoplasmic. Residues 351-371 (LPVVIPIWFLAIIFPFFGPIN) form a helical membrane-spanning segment. Over 372–374 (STV) the chain is Extracellular. The chain crosses the membrane as a helical span at residues 375–395 (GSLLVSFTVYIIPALAHIFTF). At 396–422 (RSSAARENAVEQPPRFLGRWTGAFTIN) the chain is on the cytoplasmic side. Residues 423–443 (AFIVVWVFIVGFGFGGWASMI) form a helical membrane-spanning segment. Residues 444 to 483 (NFVHQIDTFGLFTKCYQCPPPVMVSPPPISHPHFNHTHGL) lie on the Extracellular side of the membrane. Residue asparagine 478 is glycosylated (N-linked (GlcNAc...) asparagine).

It belongs to the amino acid/polyamine transporter 2 family. Amino acid/auxin permease (AAAP) (TC 2.A.18.1) subfamily.

It is found in the cell membrane. Functionally, carrier protein involved in proton-driven auxin influx. Mediates the formation of auxin gradient from developing leaves (site of auxin biosynthesis) to tips by contributing to the loading of auxin in vascular tissues and facilitating acropetal (base to tip) auxin transport within inner tissues of the root apex, and basipetal (tip to base) auxin transport within outer tissues of the root apex. The sequence is that of Auxin transporter-like protein 2 (LAX2) from Arabidopsis thaliana (Mouse-ear cress).